Reading from the N-terminus, the 389-residue chain is S-adenosylmethionine synthase (389 aa).

His-15 provides a ligand contact to ATP. Asp-17 contributes to the Mg(2+) binding site. Glu-43 contributes to the K(+) binding site. L-methionine is bound by residues Glu-56 and Gln-99. The segment at 99–109 (QSSDIQYSIDH) is flexible loop. ATP contacts are provided by residues 166 to 168 (DAK), 232 to 233 (RF), Asp-241, 247 to 248 (RK), Ser-264, and Lys-268. Asp-241 is an L-methionine binding site. An L-methionine-binding site is contributed by Lys-272.

It belongs to the AdoMet synthase family. In terms of assembly, homotetramer; dimer of dimers. It depends on Mg(2+) as a cofactor. K(+) is required as a cofactor.

The protein resides in the cytoplasm. It catalyses the reaction L-methionine + ATP + H2O = S-adenosyl-L-methionine + phosphate + diphosphate. The protein operates within amino-acid biosynthesis; S-adenosyl-L-methionine biosynthesis; S-adenosyl-L-methionine from L-methionine: step 1/1. Functionally, catalyzes the formation of S-adenosylmethionine (AdoMet) from methionine and ATP. The overall synthetic reaction is composed of two sequential steps, AdoMet formation and the subsequent tripolyphosphate hydrolysis which occurs prior to release of AdoMet from the enzyme. The chain is S-adenosylmethionine synthase from Blochmanniella pennsylvanica (strain BPEN).